The sequence spans 264 residues: Apolipoprotein A-I (264 aa).

The first 18 residues, Met-1 to Ala-18, serve as a signal peptide directing secretion. 2 tandem repeats follow at residues Leu-67–Gly-88 and Pro-89–Asn-110. Residues Leu-67–Gln-264 are 10 X approximate tandem repeats. Met-109 carries the methionine sulfoxide modification. The stretch at Lys-111–Gln-121 is one 3; half-length repeat. 3 consecutive repeat copies span residues Pro-122–Glu-143, Pro-144–Ser-165, and Pro-166–Ala-187. The stretch at Pro-188–Gly-207 is one 7; truncated repeat. Copy 8 of the repeat occupies Ser-208–Lys-229. A 9; half-length repeat occupies Pro-230–Leu-240. Repeat unit 10 spans residues Pro-241–Gln-264.

This sequence belongs to the apolipoprotein A1/A4/E family. In terms of assembly, homodimer. Interacts with APOA1BP and CLU. Component of a sperm activating protein complex (SPAP), consisting of APOA1, an immunoglobulin heavy chain, an immunoglobulin light chain and albumin. Interacts with NDRG1. Interacts with SCGB3A2. Interacts with NAXE and YJEFN3. Post-translationally, glycosylated. In terms of processing, palmitoylated. Phosphorylation sites are present in the extracellular medium.

The protein localises to the secreted. In terms of biological role, participates in the reverse transport of cholesterol from tissues to the liver for excretion by promoting cholesterol efflux from tissues and by acting as a cofactor for the lecithin cholesterol acyltransferase (LCAT). As part of the SPAP complex, activates spermatozoa motility. In Ictidomys tridecemlineatus (Thirteen-lined ground squirrel), this protein is Apolipoprotein A-I (APOA1).